The following is a 104-amino-acid chain: Large ribosomal subunit protein bL21 (104 aa).

Belongs to the bacterial ribosomal protein bL21 family. In terms of assembly, part of the 50S ribosomal subunit. Contacts protein L20.

Functionally, this protein binds to 23S rRNA in the presence of protein L20. The chain is Large ribosomal subunit protein bL21 from Francisella tularensis subsp. holarctica (strain FTNF002-00 / FTA).